Reading from the N-terminus, the 442-residue chain is HTH-type transcriptional regulator NorG (442 aa).

An HTH gntR-type domain is found at 2–46; that stretch reads KIPSHRQLAIQYNVNRVTIIKSIELLEAEGFIYTKVGSGTYVNDY. Positions 6–25 form a DNA-binding region, H-T-H motif; that stretch reads HRQLAIQYNVNRVTIIKSIE. Lys-288 carries the post-translational modification N6-(pyridoxal phosphate)lysine.

It in the C-terminal section; belongs to the class-I pyridoxal-phosphate-dependent aminotransferase family. Pyridoxal 5'-phosphate serves as cofactor.

Its function is as follows. Positively regulates the expression of the NorB efflux pump and negatively regulates the expression of the AbcA efflux pump. Binds specifically to the promoters of norA, norB and norC and abcA genes. Could also have an aminotransferase activity. This Staphylococcus aureus (strain USA300) protein is HTH-type transcriptional regulator NorG (norG).